The sequence spans 54 residues: Ovomucoid (54 aa).

Residues 4 to 54 form the Kazal-like domain; that stretch reads VDCSEYPKPACTMEHRPLCGSDNQTYDNKCNFCNAVVESNGTLTLSHFGKC. 3 disulfides stabilise this stretch: C6-C36, C14-C33, and C22-C54. The N-linked (GlcNAc...) asparagine glycan is linked to N43.

The protein localises to the secreted. This Guttera pucherani (Eastern crested guineafowl) protein is Ovomucoid.